The chain runs to 506 residues: MNIKSVVLCILDGWGNGIENNKYNAISNANPPCWQYISSNYPKCSLSACGADVGLPGGQIGNSEVGHMNIGSGRVVIQSLQRINQEIGTIENNVNLQSFINDLKSKNGVCHIMGLVSDGGVHSHQKHISTLANKISQHGIKVVIHAFLDGRDTLPNSGKKCIQEFTKSIKGNDTRIATVSGRYYAMDRDNRWKRTIEAYEAIAFAKAPCHDNAVSLIENNYQNNITDEFIRPAVIGDYQGIKPEDGVLLANFRADRMIQLASILLGKTDYAKVAKFSSILSMMKYKEDLKIPYIFPPTSFADTLGQTIEDNKLRQLRIAETEKYAHVTFFFNCGKEEPFSGEERILIPSPKVQTYDLQPEMSAFELTEKLVEKIHSQEFALIVVNYANPDMVGHTGNIKAAEKAVLAVDDCLAKVLNAVKKSSNTALIVTADHGNVECMFDEENNTPHTAHTLNKVPFIVSCDNLKLRDGRLSDIAPTILQLLGIKKPNEMTGSSLISCITLCHSS.

The Mn(2+) site is built by Asp-12 and Ser-63. The active-site Phosphoserine intermediate is Ser-63. Substrate is bound by residues His-122, 151-152 (RD), Arg-182, Arg-188, 253-256 (RADR), and Lys-323. 5 residues coordinate Mn(2+): Asp-390, His-394, Asp-432, His-433, and His-451.

The protein belongs to the BPG-independent phosphoglycerate mutase family. As to quaternary structure, monomer. It depends on Mn(2+) as a cofactor.

It carries out the reaction (2R)-2-phosphoglycerate = (2R)-3-phosphoglycerate. It functions in the pathway carbohydrate degradation; glycolysis; pyruvate from D-glyceraldehyde 3-phosphate: step 3/5. Functionally, catalyzes the interconversion of 2-phosphoglycerate and 3-phosphoglycerate. The sequence is that of 2,3-bisphosphoglycerate-independent phosphoglycerate mutase from Wolbachia pipientis wMel.